A 354-amino-acid polypeptide reads, in one-letter code: Multiple sugar-binding periplasmic receptor ChvE (354 aa).

Positions 1 to 25 are cleaved as a signal peptide; it reads MKSIISLTAAAAIGVAMFVAPAFAA.

This sequence belongs to the bacterial solute-binding protein 2 family.

It is found in the periplasm. Required for effective transcriptional induction of the vir genes by monosaccharides in response to plant signals and for normal growth and chemotaxis towards certain sugars. Functions as a periplasmic multiple sugar-binding receptor protein. It does not interact with a transport system. The protein is Multiple sugar-binding periplasmic receptor ChvE (chvE) of Rhizobium radiobacter (Agrobacterium tumefaciens).